Consider the following 1789-residue polypeptide: Genome polyprotein (1789 aa).

The disordered stretch occupies residues 1–25; it reads MMMASKDVVPTAASSENANNNSSIK. The interval 1-183 is interaction with host MAP1LC3A/LC3; it reads MMMASKDVVP…MCPLPPVDQR (183 aa). A compositionally biased stretch (low complexity) spans 12-23; it reads AASSENANNNSS. Residues 184 to 398 form an interaction with NTPase region; it reads STTPATEPTI…ASLLPDFHLQ (215 aa). Residues 301–398 are interaction with NS4; it reads HPTQDWSRDT…ASLLPDFHLQ (98 aa). Host ER membrane association regions lie at residues 318-349 and 360-398; these read KLEM…KPLN and TFMG…FHLQ. The tract at residues 399-574 is interaction with NS1-2 and NS4 and homooligomerization; sequence GPEDLARDLV…GKTKAAEHLA (176 aa). The 166-residue stretch at 532–697 folds into the SF3 helicase domain; sequence RISMARAALA…EHTRKVSPGD (166 aa). Position 560–567 (560–567) interacts with ATP; sequence GPPGIGKT. The segment at 651 to 756 is important for mitochondrion targeting; that stretch reads AIVITTNAPG…AVALTMERQD (106 aa). The interval 826 to 832 is functions as endoplasmic reticulum export signal; sequence YIIESDG. Residues 865 to 910 form a host membrane association region; that stretch reads RAVAYASCFQSAITTILQMAGSALVINRAVKRMFGTRTAAMALEGP. The tract at residues 958 to 981 is disordered; the sequence is DAVPEGKNKGKTKKGRGRKNNYNA. The segment covering 966–976 has biased composition (basic residues); it reads KGKTKKGRGRK. Residues 989–994 form an acidic region; that stretch reads DEEYEE. Y992 bears the O-(5'-phospho-RNA)-tyrosine mark. The tract at residues 1084–1100 is interaction with host EIF4G; the sequence is WADDDREVDYNEKINFE. Residues 1101 to 1281 form the Peptidase C37 domain; sequence APPTLWSRVT…QAGEGETALE (181 aa). Residues H1130, E1154, and C1239 each act as for 3CLpro activity in the active site. The RdRp catalytic domain occupies 1516–1637; sequence KNHFDADYTA…STDIDFDPAR (122 aa). D1520, D1522, D1624, and E1625 together coordinate Mg(2+).

In terms of assembly, homodimer. Homooligomer. Interacts with NTPase; this interaction increases the proapoptotic activity of the NTPase and is crucial for the formation of the viral replication complex. Interacts with NS4; this interaction is crucial for the formation of the viral replication complex. Interacts (via N-terminus) with host VAPA. Interacts with host MAP1LC3A/LC3; this interaction does not seem to be linked to host autophagy, but rather plays a role in the formation of viral factories. Homooligomer. Interacts with NS1-2; this interaction increases the proapoptotic activity of the NTPase and is crucial for the formation of the viral replication complex. Interacts with NS4; this interaction increases the proapoptotic activity of the NTPase. As to quaternary structure, homodimer. Monomer; in solution. In terms of assembly, interacts with NTPase; this interaction increases the proapoptotic activity of the NTPase. Interacts with NS1-2; this interaction is crucial for the formation of the viral replication complex. Monomer. Interacts with the RNA-directed RNA polymerase; this interaction induces the multimerization of the RdRp and enhances its activity. Interacts with host IEF4G1; this interaction plays a role in translation of viral proteins. As to quaternary structure, homohexamer; also forms fibrous hexameric oligomer. Interacts with the viral genome-linked protein; this interaction induces the multimerization of the RdRp and enhances its activity. Mg(2+) serves as cofactor. Mn(2+) is required as a cofactor. Specific enzymatic cleavages in vivo yield mature proteins. 3CLpro is first autocatalytically cleaved, then processes the whole polyprotein. NS1/2-3 and NS3-4 sites are cleaved rapidly and NS4-5, NS5-6, and NS6-7 sites are processed subsequently and less efficiently. Post-translationally, VPg is uridylylated by the polymerase and is covalently attached to the 5'-end of the polyadenylated genomic and subgenomic RNAs. This uridylylated form acts as a nucleotide-peptide primer for the polymerase. In terms of processing, cleaved by host CASP3/caspase 3 at 18-22 h.p.i. The cleavage allows NS1 secretion, which is essential for intestinal infection and resistance to IFN-lambda.

The protein localises to the host Golgi apparatus membrane. It localises to the secreted. The protein resides in the host endoplasmic reticulum membrane. Its subcellular location is the host cytoplasm. It is found in the host perinuclear region. The enzyme catalyses a ribonucleoside 5'-triphosphate + H2O = a ribonucleoside 5'-diphosphate + phosphate + H(+). It catalyses the reaction Endopeptidase with a preference for cleavage when the P1 position is occupied by Glu-|-Xaa and the P1' position is occupied by Gly-|-Yaa.. The catalysed reaction is RNA(n) + a ribonucleoside 5'-triphosphate = RNA(n+1) + diphosphate. Inhibited by the chemical compound K36/GC376, which covalently binds to the nucleophilic cysteine residue. Inhibited by various macrocyclic inhibitors. Its activity is regulated as follows. Inhibited by the guanidine salt GuHCl. Induces the proliferation of the host smooth ER membranes forming long tubular structures. These remodeled membranes probably form the viral factories that contain the replication complex. Induces the disassembly of host Golgi. May play a role in viral replication by interacting with host VAPA, a vesicle-associated membrane protein that plays a role in SNARE-mediated vesicle fusion. This interaction may target replication complex to intracellular membranes. In terms of biological role, displays NTPase activity and RNA helix-unwinding activity. Displays RNA chaperone-like activity and destabilizes dsRNA. Induces the formation of convoluted membranes derived from the host ER. These remodeled membranes probably form the viral factories that contain the replication complex. Initiates host cell death by targeting the mitochondrial outer membrane, leading to the permeabilization of mitochondria, programmed host cell death and viral egress. Probably plays a role in preventing the assembly of host stress granules. Functionally, probable key protein responsible for the formation of membrane alterations by the virus. Induces the formation of convoluted membranes derived from the host ER. These remodeled membranes probably form the viral factories that contain the replication complex. May play a role in targeting replication complex to intracellular membranes. Induces the disassembly of host Golgi and antagonism of Golgi-dependent cellular protein secretion, probably via the mislocalization of COPII-coated vesicles. Its function is as follows. Viral genome-linked protein is covalently linked to the 5'-end of the positive-strand, negative-strand genomic RNAs and subgenomic RNA. Acts as a genome-linked replication primer. May recruit ribosome to viral RNA thereby promoting viral proteins translation. Interacts with host translation initiation complex to allow the translation of viral proteins. Induces the formation of aggregates of RNA-directed RNA polymerase in the presence of RNA. Through its interaction with the viral RNA-directed RNA polymerase, plays a crucial role in enhancing the polymerase activity. Processes the polyprotein. 3CLpro-RdRp is first released by autocleavage, then all other proteins are cleaved. May cleave host polyadenylate-binding protein thereby inhibiting cellular translation. In terms of biological role, replicates genomic and antigenomic RNA by recognizing replications specific signals. Also transcribes a subgenomic mRNA by initiating RNA synthesis internally on antigenomic RNA. This sgRNA codes for structural proteins. Catalyzes the covalent attachment VPg with viral RNAs. The sequence is that of Genome polyprotein from Norovirus (strain Human/NoV/United States/Norwalk/1968/GI) (Hu/NV/NV/1968/US).